Consider the following 350-residue polypeptide: Galactokinase (350 aa).

A substrate-binding site is contributed by 14-17 (EHTD). ATP-binding positions include Ser-46 and 96–102 (GAGLSSS). Ser-102 and Glu-134 together coordinate Mg(2+). Asp-146 functions as the Proton acceptor in the catalytic mechanism. Position 196 (Tyr-196) interacts with substrate.

This sequence belongs to the GHMP kinase family. GalK subfamily.

It is found in the cytoplasm. It catalyses the reaction alpha-D-galactose + ATP = alpha-D-galactose 1-phosphate + ADP + H(+). It functions in the pathway carbohydrate metabolism; galactose metabolism. Functionally, catalyzes the transfer of the gamma-phosphate of ATP to D-galactose to form alpha-D-galactose-1-phosphate (Gal-1-P). The chain is Galactokinase from Thermotoga maritima (strain ATCC 43589 / DSM 3109 / JCM 10099 / NBRC 100826 / MSB8).